The sequence spans 432 residues: Tol-Pal system protein TolB (432 aa).

The signal sequence occupies residues 1–24 (MKLVTRMWSILIVFFLAVLQPAQA).

The protein belongs to the TolB family. In terms of assembly, the Tol-Pal system is composed of five core proteins: the inner membrane proteins TolA, TolQ and TolR, the periplasmic protein TolB and the outer membrane protein Pal. They form a network linking the inner and outer membranes and the peptidoglycan layer.

It is found in the periplasm. In terms of biological role, part of the Tol-Pal system, which plays a role in outer membrane invagination during cell division and is important for maintaining outer membrane integrity. The protein is Tol-Pal system protein TolB of Pasteurella multocida (strain Pm70).